A 1607-amino-acid polypeptide reads, in one-letter code: Laminin subunit gamma-1 (1607 aa).

A signal peptide spans 1–33 (MTGGGRAALALQPRGRLWPLLAVLAAVAGCVRA). Residues 44-283 (RPQRCMPEFV…AISDFAVGGR (240 aa)) enclose the Laminin N-terminal domain. N-linked (GlcNAc...) asparagine glycans are attached at residues N58 and N132. Intrachain disulfides connect C284/C293, C286/C303, C305/C314, C340/C349, C342/C365, C368/C377, C380/C393, C396/C408, C398/C414, C416/C425, C428/C440, C443/C454, C445/C461, C463/C472, and C475/C490. Laminin EGF-like domains follow at residues 284 to 339 (CKCN…ESLP), 340 to 395 (CDCN…ACSP), 396 to 442 (CHCS…GCRP), and 443 to 492 (CSCD…GCTP). A Laminin EGF-like 5; first part domain is found at 493-502 (CFCFGHSSVC). The region spanning 512–687 (DISSTFQIDE…PGVPATWVES (176 aa)) is the Laminin IV type A domain. N574 and N648 each carry an N-linked (GlcNAc...) asparagine glycan. The Laminin EGF-like 5; second part domain occupies 688 to 721 (CTCPVGYGGQFCETCLPGYRRETPSLGPYSPCVL). Intrachain disulfides connect C722/C731, C724/C738, C740/C749, C752/C768, C771/C779, C773/C790, C793/C802, C805/C823, C826/C840, C828/C847, C850/C859, C862/C879, C882/C896, C884/C903, C905/C914, C917/C930, C933/C945, C935/C952, C954/C963, C966/C978, C981/C993, C983/C999, C1001/C1010, and C1013/C1026. Laminin EGF-like domains lie at 722–770 (CTCN…DCQP) and 771–825 (CPCP…LCRP). Residues 826 to 881 (CQCNDNIDPNAVGNCNRLTGECLKCIYNTAGFYCDRCKEGFFGNPLAPNPADKCKA) enclose the Laminin EGF-like 8; nidogen-binding domain. Laminin EGF-like domains follow at residues 882-932 (CACN…GCER), 933-980 (CDCH…GCKP), and 981-1028 (CDCH…GCQE). Residues N1020 and N1105 are each glycosylated (N-linked (GlcNAc...) asparagine). A domain II and I region spans residues 1029–1607 (CPACYRLVKD…CFNTPSIEKP (579 aa)). Residues 1034-1594 (RLVKDKAAEH…HNLEDIKKTL (561 aa)) are a coiled coil. Residue S1147 is modified to Phosphoserine. N1159, N1173, N1203, N1221, N1239, N1378, N1393, and N1437 each carry an N-linked (GlcNAc...) asparagine glycan. S1491 is subject to Phosphoserine.

In terms of assembly, laminin is a complex glycoprotein, consisting of three different polypeptide chains (alpha, beta, gamma), which are bound to each other by disulfide bonds into a cross-shaped molecule comprising one long and three short arms with globules at each end. Gamma-1 is a subunit of laminin-1 (laminin-111 or EHS laminin), laminin-2 (laminin-211 or merosin), laminin-3 (laminin-121 or S-laminin), laminin-4 (laminin-221 or S-merosin), laminin-6 (laminin-311 or K-laminin), laminin-7 (laminin-321 or KS-laminin), laminin-8 (laminin-411), laminin-9 (laminin-421), laminin-10 (laminin-511) and laminin-11 (laminin-521). Interacts with SVEP1. As to expression, found in the basement membranes (major component).

The protein resides in the secreted. It localises to the extracellular space. It is found in the extracellular matrix. Its subcellular location is the basement membrane. Its function is as follows. Binding to cells via a high affinity receptor, laminin is thought to mediate the attachment, migration and organization of cells into tissues during embryonic development by interacting with other extracellular matrix components. The chain is Laminin subunit gamma-1 (Lamc1) from Mus musculus (Mouse).